The following is a 250-amino-acid chain: Ribonuclease HII (250 aa).

Residues 66–250 enclose the RNase H type-2 domain; it reads QLVAGVDEVG…SFAPVSEYEK (185 aa). A divalent metal cation contacts are provided by aspartate 72, glutamate 73, and aspartate 164.

This sequence belongs to the RNase HII family. Requires Mn(2+) as cofactor. The cofactor is Mg(2+).

It localises to the cytoplasm. It catalyses the reaction Endonucleolytic cleavage to 5'-phosphomonoester.. Its function is as follows. Endonuclease that specifically degrades the RNA of RNA-DNA hybrids. The chain is Ribonuclease HII from Lactobacillus johnsonii (strain CNCM I-12250 / La1 / NCC 533).